Reading from the N-terminus, the 672-residue chain is tRNA 5-methylaminomethyl-2-thiouridine biosynthesis bifunctional protein MnmC (672 aa).

The interval 1 to 243 (MTSIKNAELG…KREMIAGSME (243 aa)) is tRNA (mnm(5)s(2)U34)-methyltransferase. The interval 269 to 672 (IGGGIASAAL…LRKGKAITEL (404 aa)) is FAD-dependent cmnm(5)s(2)U34 oxidoreductase.

The protein in the N-terminal section; belongs to the methyltransferase superfamily. tRNA (mnm(5)s(2)U34)-methyltransferase family. It in the C-terminal section; belongs to the DAO family. The cofactor is FAD.

The protein resides in the cytoplasm. The catalysed reaction is 5-aminomethyl-2-thiouridine(34) in tRNA + S-adenosyl-L-methionine = 5-methylaminomethyl-2-thiouridine(34) in tRNA + S-adenosyl-L-homocysteine + H(+). Catalyzes the last two steps in the biosynthesis of 5-methylaminomethyl-2-thiouridine (mnm(5)s(2)U) at the wobble position (U34) in tRNA. Catalyzes the FAD-dependent demodification of cmnm(5)s(2)U34 to nm(5)s(2)U34, followed by the transfer of a methyl group from S-adenosyl-L-methionine to nm(5)s(2)U34, to form mnm(5)s(2)U34. In Vibrio campbellii (strain ATCC BAA-1116), this protein is tRNA 5-methylaminomethyl-2-thiouridine biosynthesis bifunctional protein MnmC.